The following is a 439-amino-acid chain: MENLAPLYVNHINEQNRRVADVLAREQLEGLAIHSGQYHRQFLDDINYPFKANPHFKAWLPVLDIPNCWILTNGRDKPVLVFYRPVDFWHKVSDVPESFWTEHFEIKLLTKAEKVADLLPKNLDTWAYIGEHLDVADVLGFKNRNPDGVMNYFHWHRSFKTDYELACMREANRVAVAGHNAAREAFYKGASEFEIQQQYLSAIGQGENDVPYGNIIALNQNAAILHYTALEHAAPANRHSFLIDAGASFNGYAADITRTYAFEKNVFDELIKAMDKMQRELVDMMRPGVRFTDLHLATHHKLAQLLLEFGIARGEASDLVEQGVTSVFFPHGLGHMLGLQVHDVAGFAHDERGTHLAAPERHPFLRCTRVLAPRHVLTIEPGFYIIDSLLTELKADGRAEAVNWDMVNTLRPFGGIRIEDNVIVHQERNENMTRDLGLN.

5 residues coordinate Mn(2+): aspartate 244, aspartate 255, histidine 335, glutamate 380, and glutamate 419.

Belongs to the peptidase M24B family. Bacterial-type prolidase subfamily. It depends on Mn(2+) as a cofactor.

The enzyme catalyses Xaa-L-Pro dipeptide + H2O = an L-alpha-amino acid + L-proline. Its function is as follows. Splits dipeptides with a prolyl residue in the C-terminal position. In Shewanella amazonensis (strain ATCC BAA-1098 / SB2B), this protein is Xaa-Pro dipeptidase.